Here is a 249-residue protein sequence, read N- to C-terminus: tRNA pseudouridine synthase A (249 aa).

The active-site Nucleophile is D54. Position 112 (Y112) interacts with substrate.

This sequence belongs to the tRNA pseudouridine synthase TruA family. As to quaternary structure, homodimer.

It carries out the reaction uridine(38/39/40) in tRNA = pseudouridine(38/39/40) in tRNA. Its function is as follows. Formation of pseudouridine at positions 38, 39 and 40 in the anticodon stem and loop of transfer RNAs. This is tRNA pseudouridine synthase A from Latilactobacillus sakei subsp. sakei (strain 23K) (Lactobacillus sakei subsp. sakei).